Consider the following 336-residue polypeptide: Inositol 2-dehydrogenase (336 aa).

This sequence belongs to the Gfo/Idh/MocA family. As to quaternary structure, homotetramer.

The enzyme catalyses myo-inositol + NAD(+) = scyllo-inosose + NADH + H(+). Functionally, involved in the oxidation of myo-inositol (MI) to 2-keto-myo-inositol (2KMI or 2-inosose). In Pseudomonas fluorescens (strain SBW25), this protein is Inositol 2-dehydrogenase.